Here is a 168-residue protein sequence, read N- to C-terminus: Crossover junction endodeoxyribonuclease RuvC (168 aa).

Residues D9, E70, and D145 contribute to the active site. Mg(2+) is bound by residues D9, E70, and D145.

It belongs to the RuvC family. As to quaternary structure, homodimer which binds Holliday junction (HJ) DNA. The HJ becomes 2-fold symmetrical on binding to RuvC with unstacked arms; it has a different conformation from HJ DNA in complex with RuvA. In the full resolvosome a probable DNA-RuvA(4)-RuvB(12)-RuvC(2) complex forms which resolves the HJ. Mg(2+) serves as cofactor.

It is found in the cytoplasm. The catalysed reaction is Endonucleolytic cleavage at a junction such as a reciprocal single-stranded crossover between two homologous DNA duplexes (Holliday junction).. Its function is as follows. The RuvA-RuvB-RuvC complex processes Holliday junction (HJ) DNA during genetic recombination and DNA repair. Endonuclease that resolves HJ intermediates. Cleaves cruciform DNA by making single-stranded nicks across the HJ at symmetrical positions within the homologous arms, yielding a 5'-phosphate and a 3'-hydroxyl group; requires a central core of homology in the junction. The consensus cleavage sequence is 5'-(A/T)TT(C/G)-3'. Cleavage occurs on the 3'-side of the TT dinucleotide at the point of strand exchange. HJ branch migration catalyzed by RuvA-RuvB allows RuvC to scan DNA until it finds its consensus sequence, where it cleaves and resolves the cruciform DNA. The protein is Crossover junction endodeoxyribonuclease RuvC of Chlamydia pneumoniae (Chlamydophila pneumoniae).